Reading from the N-terminus, the 507-residue chain is RNA-binding protein MEX3B (507 aa).

The interval 1–22 (MPSSLFADMERNGSGGGGGETL) is disordered. KH domains are found at residues 59 to 120 (MTEC…RREI) and 155 to 216 (QTTI…REEI). Disordered regions lie at residues 256–279 (NQSS…LGSA) and 426–450 (SSSS…GMRR). A compositionally biased stretch (low complexity) spans 426-446 (SSSSSSSSSSSSSSSSSSSSS). An RING-type zinc finger spans residues 456–496 (CSICFESEVIAALVPCGHNLFCMECANRICEKNQPQCPVCH).

The protein localises to the cytoplasm. Its subcellular location is the nucleus. It localises to the cytoplasmic granule. It is found in the P-body. RNA-binding protein. May be involved in post-transcriptional regulatory mechanisms. The chain is RNA-binding protein MEX3B (mex3b) from Xenopus laevis (African clawed frog).